Reading from the N-terminus, the 226-residue chain is Orotate phosphoribosyltransferase (226 aa).

5-phospho-alpha-D-ribose 1-diphosphate is bound by residues Lys26, 73-74, Arg100, Lys101, Lys104, His106, and 128-136; these read YK and EDVTTSGKS. Orotate is bound by residues Thr132 and Arg161.

This sequence belongs to the purine/pyrimidine phosphoribosyltransferase family. PyrE subfamily. Homodimer. It depends on Mg(2+) as a cofactor.

The catalysed reaction is orotidine 5'-phosphate + diphosphate = orotate + 5-phospho-alpha-D-ribose 1-diphosphate. It participates in pyrimidine metabolism; UMP biosynthesis via de novo pathway; UMP from orotate: step 1/2. In terms of biological role, catalyzes the transfer of a ribosyl phosphate group from 5-phosphoribose 1-diphosphate to orotate, leading to the formation of orotidine monophosphate (OMP). The sequence is that of Orotate phosphoribosyltransferase from Agathobacter rectalis (strain ATCC 33656 / DSM 3377 / JCM 17463 / KCTC 5835 / VPI 0990) (Eubacterium rectale).